A 308-amino-acid chain; its full sequence is Transcription factor zip-2 (308 aa).

The span at 217-229 (QSSSSSTVETTIT) shows a compositional bias: polar residues. The segment at 217–277 (QSSSSSTVET…RESKEERERL (61 aa)) is disordered. Residues 242 to 305 (SSDYRHKRDK…EDYKRLVMMF (64 aa)) enclose the bZIP domain. The tract at residues 246-276 (RHKRDKNNLASQKSRQKRQAKIRESKEERER) is basic motif. A compositionally biased stretch (basic and acidic residues) spans 266–277 (KIRESKEERERL). Residues 277 to 291 (LEKRKVQLQAMVLTL) are leucine-zipper.

Belongs to the bZIP family. C/EBP subfamily. Expressed in the pharynx and throughout the intestine.

It is found in the nucleus. Functionally, transcription factor that binds to the promoter and the enhancer regions of target genes. May act together with the bZIP transcription factor, cebp-2. Involved in responding to mitochondrial damage. Plays a role in the delay of age-associated mitochondrial fragmentation and muscle decline. Has a protective role in response to infection by the Gram-negative bacterium P.aeruginosa. Required to prevent P.aeruginosa ToxA-mediated lethality. Required for the activation of several infection response genes including irg-1 and irg-2 following P.aeruginosa infection; target gene activation may involve effects of the bacterial toxin, ToxA, and perhaps other toxins. In Caenorhabditis elegans, this protein is Transcription factor zip-2.